We begin with the raw amino-acid sequence, 373 residues long: Chaperone protein DnaJ (373 aa).

Residues 5–70 (DFYATLGVAR…EKRAMYDQYG (66 aa)) enclose the J domain. Residues 134-212 (GVKKRINIPT…CRGVGRNKAV (79 aa)) form a CR-type zinc finger. Positions 147, 150, 164, 167, 186, 189, 200, and 203 each coordinate Zn(2+). CXXCXGXG motif repeat units lie at residues 147–154 (CDVCNGSG), 164–171 (CPTCKGSG), 186–193 (CPTCRGAG), and 200–207 (CVKCRGVG).

Belongs to the DnaJ family. Homodimer. It depends on Zn(2+) as a cofactor.

The protein resides in the cytoplasm. In terms of biological role, participates actively in the response to hyperosmotic and heat shock by preventing the aggregation of stress-denatured proteins and by disaggregating proteins, also in an autonomous, DnaK-independent fashion. Unfolded proteins bind initially to DnaJ; upon interaction with the DnaJ-bound protein, DnaK hydrolyzes its bound ATP, resulting in the formation of a stable complex. GrpE releases ADP from DnaK; ATP binding to DnaK triggers the release of the substrate protein, thus completing the reaction cycle. Several rounds of ATP-dependent interactions between DnaJ, DnaK and GrpE are required for fully efficient folding. Also involved, together with DnaK and GrpE, in the DNA replication of plasmids through activation of initiation proteins. This is Chaperone protein DnaJ from Neisseria gonorrhoeae (strain ATCC 700825 / FA 1090).